We begin with the raw amino-acid sequence, 357 residues long: Sorbitol dehydrogenase (357 aa).

At A2 the chain carries N-acetylalanine. C45 lines the Zn(2+) pocket. Position 51 (Y51) interacts with substrate. The Zn(2+) site is built by H70 and E71. E156 serves as a coordination point for substrate. The NAD(+) site is built by I184, D204, and R209. S211 and S225 each carry phosphoserine. NAD(+)-binding positions include 273–275 (VGL) and 297–299 (VFR). Residues R299 and Y300 each coordinate substrate.

Belongs to the zinc-containing alcohol dehydrogenase family. As to quaternary structure, homotetramer. Zn(2+) is required as a cofactor.

It localises to the mitochondrion membrane. The protein resides in the cell projection. The protein localises to the cilium. Its subcellular location is the flagellum. It catalyses the reaction xylitol + NAD(+) = D-xylulose + NADH + H(+). The catalysed reaction is L-iditol + NAD(+) = keto-L-sorbose + NADH + H(+). The enzyme catalyses keto-D-fructose + NADH + H(+) = D-sorbitol + NAD(+). Its function is as follows. Polyol dehydrogenase that catalyzes the reversible NAD(+)-dependent oxidation of various sugar alcohols. Is active with xylitol, L-iditol and D-sorbitol (D-glucitol) as substrates, leading to the C2-oxidized products D-xylulose, L-sorbose and D-fructose, respectively. Is a key enzyme in the polyol pathway that interconverts glucose and fructose via sorbitol, which constitutes an important alternate route for glucose metabolism. May play a role in sperm motility by using sorbitol as an alternative energy source for sperm motility. The chain is Sorbitol dehydrogenase (SORD) from Pongo abelii (Sumatran orangutan).